A 1406-amino-acid chain; its full sequence is DNA-directed RNA polymerase subunit beta' (1406 aa).

Zn(2+) contacts are provided by Cys-70, Cys-72, Cys-85, and Cys-88. Residues Asp-460, Asp-462, and Asp-464 each coordinate Mg(2+). The Zn(2+) site is built by Cys-814, Cys-888, Cys-895, and Cys-898.

The protein belongs to the RNA polymerase beta' chain family. The RNAP catalytic core consists of 2 alpha, 1 beta, 1 beta' and 1 omega subunit. When a sigma factor is associated with the core the holoenzyme is formed, which can initiate transcription. Mg(2+) serves as cofactor. The cofactor is Zn(2+).

It carries out the reaction RNA(n) + a ribonucleoside 5'-triphosphate = RNA(n+1) + diphosphate. Functionally, DNA-dependent RNA polymerase catalyzes the transcription of DNA into RNA using the four ribonucleoside triphosphates as substrates. The polypeptide is DNA-directed RNA polymerase subunit beta' (Yersinia pseudotuberculosis serotype O:1b (strain IP 31758)).